A 133-amino-acid chain; its full sequence is Cytochrome c-554 (133 aa).

Gln-1 is modified (pyrrolidone carboxylic acid). 4 residues coordinate heme c: Met-17, Cys-122, Cys-125, and His-126.

In terms of processing, binds 1 heme c group covalently per subunit.

It is found in the periplasm. Monoheme c-type cytochrome, that is particularly expressed when cells generate energy via aerobic respiration. The protein is Cytochrome c-554 (cycF) of Cereibacter sphaeroides (Rhodobacter sphaeroides).